Here is an 803-residue protein sequence, read N- to C-terminus: Leucine--tRNA ligase (803 aa).

A 'HIGH' region motif is present at residues 40-51 (PYPSGAGLHVGH). A 'KMSKS' region motif is present at residues 575–579 (KMSKS). Lys578 provides a ligand contact to ATP.

The protein belongs to the class-I aminoacyl-tRNA synthetase family.

Its subcellular location is the cytoplasm. It catalyses the reaction tRNA(Leu) + L-leucine + ATP = L-leucyl-tRNA(Leu) + AMP + diphosphate. The protein is Leucine--tRNA ligase of Listeria monocytogenes serotype 4a (strain HCC23).